The primary structure comprises 806 residues: ATP-dependent zinc metalloprotease FTSH 9, chloroplastic (806 aa).

A chloroplast-targeting transit peptide spans 1–62; that stretch reads MTSIELLSPL…SSIQLPQSVP (62 aa). The tract at residues 84–116 is disordered; it reads SSRTIVNCQEGDQKASSSEGEGKTNKDKGRKQG. Helical transmembrane passes span 133–153 and 271–291; these read IIQA…MFVV and GGFF…AGLL. 369–376 is an ATP binding site; it reads GLPGTGKT. Histidine 594 provides a ligand contact to Zn(2+). The active site involves glutamate 595. Positions 598 and 677 each coordinate Zn(2+).

It in the N-terminal section; belongs to the AAA ATPase family. In the C-terminal section; belongs to the peptidase M41 family. It depends on Zn(2+) as a cofactor.

The protein localises to the plastid. The protein resides in the chloroplast thylakoid membrane. Functionally, probable ATP-dependent zinc metallopeptidase. This is ATP-dependent zinc metalloprotease FTSH 9, chloroplastic (FTSH9) from Arabidopsis thaliana (Mouse-ear cress).